The primary structure comprises 73 residues: Translation initiation factor IF-1 (73 aa).

One can recognise an S1-like domain in the interval 1-72 (MSKDDLIQFT…TKGRVILRHQ (72 aa)).

Belongs to the IF-1 family. In terms of assembly, component of the 30S ribosomal translation pre-initiation complex which assembles on the 30S ribosome in the order IF-2 and IF-3, IF-1 and N-formylmethionyl-tRNA(fMet); mRNA recruitment can occur at any time during PIC assembly.

The protein resides in the cytoplasm. One of the essential components for the initiation of protein synthesis. Stabilizes the binding of IF-2 and IF-3 on the 30S subunit to which N-formylmethionyl-tRNA(fMet) subsequently binds. Helps modulate mRNA selection, yielding the 30S pre-initiation complex (PIC). Upon addition of the 50S ribosomal subunit IF-1, IF-2 and IF-3 are released leaving the mature 70S translation initiation complex. In Rickettsia bellii (strain OSU 85-389), this protein is Translation initiation factor IF-1.